A 343-amino-acid polypeptide reads, in one-letter code: Delta(1)-pyrroline-2-carboxylate/Delta(1)-piperideine-2-carboxylate reductase (343 aa).

Serine 53 serves as the catalytic Charge relay system. Catalysis depends on histidine 54, which acts as the Proton donor. Residue arginine 58 coordinates substrate. 126–130 (HFAAL) is a binding site for NADP(+). Threonine 166 lines the substrate pocket. 184–186 (DLA) lines the NADP(+) pocket. 192–193 (HG) is a binding site for substrate. Aspartate 194 serves as the catalytic Charge relay system. NADP(+) is bound by residues 236–237 (HK) and 309–315 (RLPGDRR).

It belongs to the LDH2/MDH2 oxidoreductase family. Homodimer.

It catalyses the reaction L-pipecolate + NADP(+) = Delta(1)-piperideine-2-carboxylate + NADPH + H(+). The enzyme catalyses L-proline + NADP(+) = 1-pyrroline-2-carboxylate + NADPH + H(+). It carries out the reaction N-methyl-L-alanine + NADP(+) + H2O = methylamine + pyruvate + NADPH + H(+). With respect to regulation, is inhibited by the substrate analog pyrrole-2-carboxylate, and by 2-picolinate. In terms of biological role, catalyzes the reduction of both Delta(1)-pyrroline-2-carboxylate (Pyr2C) and Delta(1)-piperideine-2-carboxylate (Pip2C) to L-proline and L-pipecolate, respectively, using NADPH as the electron donor. Can catalyze the reverse oxidation reactions, albeit at a much lower rate. Is also able to catalyze in vitro the NADPH-dependent formation of N-methylalanine from pyruvate and N-methylamine; can act on other alpha-keto acids and specifically uses methylamine and not ammonia for these reductive amination reactions. Can use NADH instead of NADPH, although with much less efficiency. This chain is Delta(1)-pyrroline-2-carboxylate/Delta(1)-piperideine-2-carboxylate reductase, found in Pseudomonas syringae pv. tomato.